The primary structure comprises 122 residues: Prefoldin subunit 1 (122 aa).

Residue alanine 2 is modified to N-acetylalanine.

This sequence belongs to the prefoldin subunit beta family. As to quaternary structure, heterohexamer of two PFD-alpha type and four PFD-beta type subunits.

Functionally, binds specifically to cytosolic chaperonin (c-CPN) and transfers target proteins to it. Binds to nascent polypeptide chain and promotes folding in an environment in which there are many competing pathways for nonnative proteins. In Bos taurus (Bovine), this protein is Prefoldin subunit 1 (PFDN1).